We begin with the raw amino-acid sequence, 447 residues long: UMP-CMP kinase 2, mitochondrial (447 aa).

The N-terminal 73 residues, 1 to 73 (MALISRPRAP…ELLGPPGRSY (73 aa)), are a transit peptide targeting the mitochondrion. 259–266 (GLDATGKT) contributes to the ATP binding site. Residues 380–412 (EERVRRLQGRGQEKTKEEAELEANNVFRQKVEM) adopt a coiled-coil conformation.

The protein belongs to the thymidylate kinase family. As to expression, strongly expressed in the brain.

It localises to the mitochondrion. The catalysed reaction is CMP + ATP = CDP + ADP. It catalyses the reaction dCMP + ATP = dCDP + ADP. The enzyme catalyses a 2'-deoxyribonucleoside 5'-diphosphate + ATP = a 2'-deoxyribonucleoside 5'-triphosphate + ADP. It carries out the reaction a ribonucleoside 5'-diphosphate + ATP = a ribonucleoside 5'-triphosphate + ADP. In terms of biological role, mitochondrial nucleotide monophosphate kinase needed for salvage dNTP synthesis that mediates immunomodulatory and antiviral activities through IFN-dependent and IFN-independent pathways. Restricts the replication of multiple viruses including flaviviruses or coronaviruses. Together with viperin/RSAD2 and ddhCTP, suppresses the replication of several coronaviruses through inhibition of the viral RNA-dependent RNA polymerase activities. Concerning flaviviruses, restricts RNA translation when localized to the mitochondria independently of its kinase activity. Is able to phosphorylate dUMP, dCMP, CMP, UMP and monophosphates of the pyrimidine nucleoside analogs ddC, dFdC, araC, BVDU and FdUrd with ATP as phosphate donor. Efficacy is highest for dUMP followed by dCMP while CMP and UMP are poor substrates. Controls therefore mitochondrial DNA synthesis by supplying required deoxyribonucleotides. CMPK2-dependent mitochondrial DNA synthesis is necessary for the production of oxidized mitochondrial DNA fragments after exposure to NLRP3 activators. In turn, cytosolic oxidized mtDNA associates with the NLRP3 inflammasome complex and is required for its activation. The protein is UMP-CMP kinase 2, mitochondrial (Cmpk2) of Mus musculus (Mouse).